Here is a 292-residue protein sequence, read N- to C-terminus: 11-beta-hydroxysteroid dehydrogenase 1 (292 aa).

The chain crosses the membrane as a helical span at residues 7-24 (YLLPILGIFLAYYYYSAN).

Belongs to the short-chain dehydrogenases/reductases (SDR) family. Homodimer. In terms of tissue distribution, expressed highest in liver and ovaries (corpora lutea, granulosa cells, thecal, uterine caruncle and intercarunculer tissues), lower expression in kidney and spleen, and lowest in the adrenal.

The protein resides in the endoplasmic reticulum membrane. It carries out the reaction an 11beta-hydroxysteroid + NADP(+) = an 11-oxosteroid + NADPH + H(+). It catalyses the reaction corticosterone + NADP(+) = 11-dehydrocorticosterone + NADPH + H(+). The catalysed reaction is cortisone + NADPH + H(+) = cortisol + NADP(+). The enzyme catalyses a 7beta-hydroxysteroid + NADP(+) = a 7-oxosteroid + NADPH + H(+). It carries out the reaction 7-oxocholesterol + NADPH + H(+) = 7beta-hydroxycholesterol + NADP(+). It catalyses the reaction chenodeoxycholate + NADP(+) = 7-oxolithocholate + NADPH + H(+). The catalysed reaction is 7-oxolithocholate + NADPH + H(+) = ursodeoxycholate + NADP(+). The enzyme catalyses glycochenodeoxycholate + NADP(+) = 7-oxoglycolithocholate + NADPH + H(+). It carries out the reaction taurochenodeoxycholate + NADP(+) = 7-oxotaurolithocholate + NADPH + H(+). It catalyses the reaction tauroursodeoxycholate + NADP(+) = 7-oxotaurolithocholate + NADPH + H(+). The catalysed reaction is glycoursodeoxycholate + NADP(+) = 7-oxoglycolithocholate + NADPH + H(+). The enzyme catalyses 7-oxopregnenolone + NADPH + H(+) = 7beta-hydroxypregnenolone + NADP(+). It carries out the reaction 3beta,7alpha-dihydroxyandrost-5-en-17-one + NADP(+) = 3beta-hydroxy-5-androstene-7,17-dione + NADPH + H(+). It catalyses the reaction 3beta-hydroxy-5-androstene-7,17-dione + NADPH + H(+) = 3beta,7beta-dihydroxyandrost-5-en-17-one + NADP(+). The catalysed reaction is 3beta-hydroxy-5alpha-androstane-7,17-dione + NADPH + H(+) = 3beta,7beta-dihydroxy-5alpha-androstan-17-one + NADP(+). Its function is as follows. Controls the reversible conversion of biologically active glucocorticoids such as cortisone to cortisol, and 11-dehydrocorticosterone to corticosterone in the presence of NADP(H). Participates in the corticosteroid receptor-mediated anti-inflammatory response, as well as metabolic and homeostatic processes. Plays a role in the secretion of aqueous humor in the eye, maintaining a normotensive, intraocular environment. Bidirectional in vitro, predominantly functions as a reductase in vivo, thereby increasing the concentration of active glucocorticoids. It has broad substrate specificity, besides glucocorticoids, it accepts other steroid and sterol substrates. Interconverts 7-oxo- and 7-hydroxy-neurosteroids such as 7-oxopregnenolone and 7beta-hydroxypregnenolone, 7-oxodehydroepiandrosterone (3beta-hydroxy-5-androstene-7,17-dione) and 7beta-hydroxydehydroepiandrosterone (3beta,7beta-dihydroxyandrost-5-en-17-one), among others. Catalyzes the stereo-specific conversion of the major dietary oxysterol, 7-ketocholesterol (7-oxocholesterol), into the more polar 7-beta-hydroxycholesterol metabolite. 7-oxocholesterol is one of the most important oxysterols, it participates in several events such as induction of apoptosis, accumulation in atherosclerotic lesions, lipid peroxidation, and induction of foam cell formation. Mediates the 7-oxo reduction of 7-oxolithocholate mainly to chenodeoxycholate, and to a lesser extent to ursodeoxycholate, both in its free form and when conjugated to glycine or taurine, providing a link between glucocorticoid activation and bile acid metabolism. Catalyzes the synthesis of 7-beta-25-dihydroxycholesterol from 7-oxo-25-hydroxycholesterol in vitro, which acts as a ligand for the G-protein-coupled receptor (GPCR) Epstein-Barr virus-induced gene 2 (EBI2) and may thereby regulate immune cell migration. This chain is 11-beta-hydroxysteroid dehydrogenase 1, found in Bos taurus (Bovine).